The primary structure comprises 271 residues: Na(+), Li(+), K(+)/H(+) antiporter subunit B (271 aa).

The next 7 membrane-spanning stretches (helical) occupy residues 2–22, 36–56, 94–114, 130–150, 152–172, 193–213, and 216–236; these read ILLTIFWDTLLDILPIAAIIF, LPQVLAGFFMVWVGLSLFLVG, WVYLFAFAIGASTTIAEPSLI, PFMLRIAVALGMAFGITLGTW, IVMGWPLQWFVFAAYCLVIIQ, STITVPIIAALGLGLAASIPG, and ALMDGFGMIALACLFPIITVM. The segment at 252–271 is disordered; it reads TPHLSYSKAPPPSKGDNNAL.

It belongs to the UmpA/UmpB family. Heterodimer composed of UmpA and UmpB.

The protein localises to the cell membrane. Functionally, part of a two-component antiporter that catalyzes the efflux of Na(+), Li(+) and K(+) in exchange for external protons. Shows a preference for Na(+), followed by K(+) and Li(+). This Vreelandella zhaodongensis (Halomonas zhaodongensis) protein is Na(+), Li(+), K(+)/H(+) antiporter subunit B.